The chain runs to 274 residues: Putative homeobox protein Meis3-like 1 (274 aa).

The MEIS N-terminal domain occupies Gly12–Lys65. Disordered regions lie at residues Asp108–Ile167 and Asn228–Glu248. A compositionally biased stretch (polar residues) spans Gly123 to Gln135. The segment at residues Arg161 to Met223 is a DNA-binding region (homeobox).

It belongs to the TALE/MEIS homeobox family.

It is found in the nucleus. This chain is Putative homeobox protein Meis3-like 1 (MEIS3P1), found in Homo sapiens (Human).